We begin with the raw amino-acid sequence, 645 residues long: Cytoplasmic dynein 1 intermediate chain 1 (645 aa).

Basic and acidic residues-rich tracts occupy residues methionine 1–arginine 13 and glutamine 20–glutamate 58. Disordered stretches follow at residues methionine 1–glutamate 58 and methionine 96–glutamine 125. Serine 2 carries the post-translational modification N-acetylserine. The interval serine 2–threonine 123 is interaction with DCTN1. A phosphoserine mark is found at serine 50 and serine 100. Positions methionine 96 to serine 107 are enriched in low complexity. At threonine 105 the chain carries Phosphothreonine. Residues serine 107, serine 111, and serine 114 each carry the phosphoserine modification. Residues lysine 147 to valine 163 form an interaction with DYNLT1 region. The disordered stretch occupies residues glutamate 169–lysine 221. Threonine 176 is modified (phosphothreonine). A phosphoserine mark is found at serine 179 and serine 197. Residues valine 189–lysine 221 are compositionally biased toward basic and acidic residues. WD repeat units lie at residues serine 285–glutamate 334, histidine 338–valine 378, alanine 387–glutamate 428, serine 437–glycine 477, glycine 482–serine 527, aspartate 530–threonine 570, and glutamate 576–asparagine 615. Serine 635 carries the post-translational modification Phosphoserine.

Belongs to the dynein intermediate chain family. In terms of assembly, homodimer. The cytoplasmic dynein 1 complex consists of two catalytic heavy chains (HCs) and a number of non-catalytic subunits presented by intermediate chains (ICs), light intermediate chains (LICs) and light chains (LCs); the composition seems to vary in respect to the IC, LIC and LC composition. The heavy chain homodimer serves as a scaffold for the probable homodimeric assembly of the respective non-catalytic subunits. The ICs and LICs bind directly to the HC dimer and the LCs assemble on the IC dimer. Interacts with DYNC1H1. Interacts with DYNLT1 and DYNLT3. Interacts with DCTN1. Interacts with MCRS1; the interaction is required for the proper distribution of centriolar satellites.

Its subcellular location is the cytoplasm. The protein localises to the chromosome. The protein resides in the centromere. It localises to the kinetochore. It is found in the cytoskeleton. Its subcellular location is the spindle pole. Functionally, acts as one of several non-catalytic accessory components of the cytoplasmic dynein 1 complex that are thought to be involved in linking dynein to cargos and to adapter proteins that regulate dynein function. Cytoplasmic dynein 1 acts as a motor for the intracellular retrograde motility of vesicles and organelles along microtubules. The intermediate chains mediate the binding of dynein to dynactin via its 150 kDa component (p150-glued) DCTN1. May play a role in mediating the interaction of cytoplasmic dynein with membranous organelles and kinetochores. The polypeptide is Cytoplasmic dynein 1 intermediate chain 1 (DYNC1I1) (Homo sapiens (Human)).